A 421-amino-acid chain; its full sequence is Lipid II:glycine glycyltransferase (421 aa).

It belongs to the FemABX family. As to quaternary structure, monomer.

The protein localises to the cytoplasm. It carries out the reaction beta-D-GlcNAc-(1-&gt;4)-Mur2Ac(oyl-L-Ala-D-isoglutaminyl-L-Lys-D-Ala-D-Ala)-di-trans,octa-cis-undecaprenyl diphosphate + glycyl-tRNA(Gly) = beta-D-GlcNAc-(1-&gt;4)-Mur2Ac(oyl-L-Ala-D-isoglutaminyl-L-Lys-(N(6)-Gly)-D-Ala-D-Ala)-di-trans,octa-cis-undecaprenyl diphosphate + tRNA(Gly) + H(+). Catalyzes the incorporation of the first glycine of the pentaglycine interpeptide bridge, which is characteristic of the S.aureus peptidoglycan. This glycine is added to the epsilon-amino group of the L-lysine of the membrane-bound lipid II intermediate (GlcNAc-(beta-1,4)-N-acetylmuramic acid(-L-Ala-D-iGln-L-Lys-D-Ala-D-Ala)-pyrophosphoryl-undecaprenol), using glycyl-tRNA(Gly) as donor, in a ribosome-independent mechanism. Involved in methicillin resistance. This Staphylococcus aureus (strain COL) protein is Lipid II:glycine glycyltransferase (femX).